The primary structure comprises 155 residues: Large ribosomal subunit protein uL22c (155 aa).

Belongs to the universal ribosomal protein uL22 family. In terms of assembly, part of the 50S ribosomal subunit.

The protein resides in the plastid. Its subcellular location is the chloroplast. In terms of biological role, this protein binds specifically to 23S rRNA. Functionally, the globular domain of the protein is located near the polypeptide exit tunnel on the outside of the subunit, while an extended beta-hairpin is found that lines the wall of the exit tunnel in the center of the 70S ribosome. This chain is Large ribosomal subunit protein uL22c (rpl22), found in Nicotiana tomentosiformis (Tobacco).